The sequence spans 638 residues: DNA gyrase subunit B (638 aa).

A Toprim domain is found at 422–536; the sequence is SELYIVEGDS…NGYVYIAQPP (115 aa). Mg(2+)-binding residues include E428, D501, and D503.

The protein belongs to the type II topoisomerase GyrB family. In terms of assembly, heterotetramer, composed of two GyrA and two GyrB chains. In the heterotetramer, GyrA contains the active site tyrosine that forms a transient covalent intermediate with DNA, while GyrB binds cofactors and catalyzes ATP hydrolysis. The cofactor is Mg(2+). Requires Mn(2+) as cofactor. Ca(2+) is required as a cofactor.

The protein resides in the cytoplasm. The enzyme catalyses ATP-dependent breakage, passage and rejoining of double-stranded DNA.. Its function is as follows. A type II topoisomerase that negatively supercoils closed circular double-stranded (ds) DNA in an ATP-dependent manner to modulate DNA topology and maintain chromosomes in an underwound state. Negative supercoiling favors strand separation, and DNA replication, transcription, recombination and repair, all of which involve strand separation. Also able to catalyze the interconversion of other topological isomers of dsDNA rings, including catenanes and knotted rings. Type II topoisomerases break and join 2 DNA strands simultaneously in an ATP-dependent manner. This Bacillus subtilis (strain 168) protein is DNA gyrase subunit B.